The chain runs to 455 residues: Ribulose bisphosphate carboxylase large chain (455 aa).

At lysine 5 the chain carries N6,N6,N6-trimethyllysine. Substrate contacts are provided by asparagine 114 and threonine 164. Catalysis depends on lysine 166, which acts as the Proton acceptor. Lysine 168 contributes to the substrate binding site. Residues lysine 192, aspartate 194, and glutamate 195 each coordinate Mg(2+). Lysine 192 carries the N6-carboxylysine modification. The active-site Proton acceptor is histidine 285. Substrate contacts are provided by arginine 286, histidine 318, and serine 370.

Belongs to the RuBisCO large chain family. Type I subfamily. Heterohexadecamer of 8 large chains and 8 small chains; disulfide-linked. The disulfide link is formed within the large subunit homodimers. It depends on Mg(2+) as a cofactor. Post-translationally, the disulfide bond which can form in the large chain dimeric partners within the hexadecamer appears to be associated with oxidative stress and protein turnover.

The protein resides in the plastid. It localises to the chloroplast. The enzyme catalyses 2 (2R)-3-phosphoglycerate + 2 H(+) = D-ribulose 1,5-bisphosphate + CO2 + H2O. It carries out the reaction D-ribulose 1,5-bisphosphate + O2 = 2-phosphoglycolate + (2R)-3-phosphoglycerate + 2 H(+). In terms of biological role, ruBisCO catalyzes two reactions: the carboxylation of D-ribulose 1,5-bisphosphate, the primary event in carbon dioxide fixation, as well as the oxidative fragmentation of the pentose substrate in the photorespiration process. Both reactions occur simultaneously and in competition at the same active site. The chain is Ribulose bisphosphate carboxylase large chain from Vachellia farnesiana (Sweet acacia).